The primary structure comprises 120 residues: Prefoldin subunit beta (120 aa).

The protein belongs to the prefoldin subunit beta family. As to quaternary structure, heterohexamer of two alpha and four beta subunits.

Its subcellular location is the cytoplasm. Molecular chaperone capable of stabilizing a range of proteins. Seems to fulfill an ATP-independent, HSP70-like function in archaeal de novo protein folding. This Methanospirillum hungatei JF-1 (strain ATCC 27890 / DSM 864 / NBRC 100397 / JF-1) protein is Prefoldin subunit beta.